Reading from the N-terminus, the 248-residue chain is Deoxyribose-phosphate aldolase (248 aa).

The active-site Proton donor/acceptor is the aspartate 117. Catalysis depends on lysine 179, which acts as the Schiff-base intermediate with acetaldehyde. Lysine 208 functions as the Proton donor/acceptor in the catalytic mechanism.

It belongs to the DeoC/FbaB aldolase family. DeoC type 1 subfamily.

The protein resides in the cytoplasm. The enzyme catalyses 2-deoxy-D-ribose 5-phosphate = D-glyceraldehyde 3-phosphate + acetaldehyde. Its pathway is carbohydrate degradation; 2-deoxy-D-ribose 1-phosphate degradation; D-glyceraldehyde 3-phosphate and acetaldehyde from 2-deoxy-alpha-D-ribose 1-phosphate: step 2/2. Its function is as follows. Catalyzes a reversible aldol reaction between acetaldehyde and D-glyceraldehyde 3-phosphate to generate 2-deoxy-D-ribose 5-phosphate. This is Deoxyribose-phosphate aldolase from Thermotoga maritima (strain ATCC 43589 / DSM 3109 / JCM 10099 / NBRC 100826 / MSB8).